The sequence spans 263 residues: Aquaporin Lacbi1:247946 (263 aa).

The Cytoplasmic segment spans residues 1–18 (MKLTISHHKCAIRKVMAE). The chain crosses the membrane as a helical span at residues 19–39 (FVGVALLVIFGAGTACQVVLS). The Extracellular segment spans residues 40–45 (TNPSSF). The chain crosses the membrane as a helical span at residues 46–66 (LSINFGWAIGIATGAWVSAGI). Residues 67 to 89 (SGGHINPAITIAMATYRGFPWRE) are Cytoplasmic-facing. Residues 72–74 (NPA) carry the NPA 1 motif. A helical transmembrane segment spans residues 90–110 (VPGYIFAQALGGFVGAALVYA). Residues 111–143 (NYFHAIDIFEGGHIRTQATASLFATFALPYMTQ) are Extracellular-facing. A helical membrane pass occupies residues 144–164 (ASCFFSEFLATAVLFIVFLAL). The Cytoplasmic portion of the chain corresponds to 165-169 (NDKHN). Residues 170–190 (GALTNGLLPFALFILFIGLGA) form a helical membrane-spanning segment. Over 191 to 227 (SLGMQTGYAVNPARDFGPRLFLAMAGYGKAVFNYRRQ) the chain is Extracellular. An NPA 2 motif is present at residues 201 to 203 (NPA). Residues 228–248 (YWIWAPIIAPILGAQAGGLLY) traverse the membrane as a helical segment. Topologically, residues 249 to 263 (DTSIYNGDDSPIKWR) are cytoplasmic.

This sequence belongs to the MIP/aquaporin (TC 1.A.8) family.

The protein resides in the membrane. The enzyme catalyses H2O(in) = H2O(out). Functionally, water channel required to facilitate the transport of water across membranes. Shows low but significant water conductivity, but no glycerol nor ammonium transport activities. The protein is Aquaporin Lacbi1:247946 of Laccaria bicolor (strain S238N-H82 / ATCC MYA-4686) (Bicoloured deceiver).